We begin with the raw amino-acid sequence, 60 residues long: Phospholipase A2 (60 aa).

Residues Tyr-27, Gly-29, and Gly-31 each contribute to the Ca(2+) site. Cys-28 and Cys-44 are oxidised to a cystine. His-47 is a catalytic residue. Asp-48 serves as a coordination point for Ca(2+).

The cofactor is Ca(2+). Expressed by the venom gland.

The protein resides in the secreted. It carries out the reaction a 1,2-diacyl-sn-glycero-3-phosphocholine + H2O = a 1-acyl-sn-glycero-3-phosphocholine + a fatty acid + H(+). Snake venom phospholipase A2 (PLA2) that displays mild but significant inhibition of mouse platelet aggregation induced by ADP and collagen. In vivo, induces edema in the foot pads and gastrocnemius muscles of mice but shows no myonecrotic or myotoxic activity. PA2 catalyzes the calcium-dependent hydrolysis of the 2-acyl groups in 3-sn-phosphoglycerides. This is Phospholipase A2 from Lachesis muta rhombeata (Bushmaster).